The following is a 206-amino-acid chain: Large ribosomal subunit protein eL13x (206 aa).

The segment at 186 to 206 is disordered; that stretch reads NARHAGARAKRAAEAEKEEKK. Residues 196 to 206 show a composition bias toward basic and acidic residues; sequence RAAEAEKEEKK.

Belongs to the eukaryotic ribosomal protein eL13 family.

The sequence is that of Large ribosomal subunit protein eL13x (RPL13D) from Arabidopsis thaliana (Mouse-ear cress).